The following is a 2499-amino-acid chain: Probable polyketide synthase 22 (2499 aa).

The region spanning 11 to 430 is the Ketosynthase family 3 (KS3) domain; that stretch reads DNQVAIVGLG…GSNACVLLSE (420 aa). Catalysis depends on for beta-ketoacyl synthase activity residues Cys-177, His-316, and His-354. Residues 623-656 form an acyl/malonyl transferases region; sequence GITPSIIVGHSLGEVASAFCSGMIDLETACFVIY. The active-site For acyl/malonyl transferase activity is the Ser-633. An N-terminal hotdog fold region spans residues 922 to 1044; that stretch reads APINQLGNKN…SRILMKSLDV (123 aa). The PKS/mFAS DH domain occupies 922–1209; the sequence is APINQLGNKN…IASTLSTKSE (288 aa). Catalysis depends on His-956, which acts as the Proton acceptor; for dehydratase activity. Residues 1059–1209 are C-terminal hotdog fold; the sequence is NWSTLKREQL…IASTLSTKSE (151 aa). The active-site Proton donor; for dehydratase activity is the Asp-1121. One can recognise a Carrier domain in the interval 2414–2491; sequence EKEFSIRQDI…QIINIVTTKV (78 aa). Ser-2451 is modified (O-(pantetheine 4'-phosphoryl)serine).

The cofactor is pantetheine 4'-phosphate.

In terms of biological role, probable polyketide synthase. This chain is Probable polyketide synthase 22 (pks22), found in Dictyostelium discoideum (Social amoeba).